Consider the following 219-residue polypeptide: Factor in the germline alpha (219 aa).

A bHLH domain is found at 65 to 117 (ERRRVANAKERERIKNLNRGFARLKALVPFLPQSRKPSKVDILKGATEYIQVL). The disordered stretch occupies residues 124–151 (AKDSKKQDPDEQSYSNNSSESHTSSARQ). Residues 136 to 148 (SYSNNSSESHTSS) show a composition bias toward low complexity.

In terms of assembly, heterodimer with TCF3/isoform E12. In terms of tissue distribution, germ cells. Expressed in the fetal ovary, but not by a range of other tissues. Expression increases across mid-gestation, rising some 40-fold by the time of primordial follicle formation.

It is found in the nucleus. In terms of biological role, germline specific transcription factor implicated in postnatal oocyte-specific gene expression. Plays a key regulatory role in the expression of multiple oocyte-specific genes, including those that initiate folliculogenesis and those that encode the zona pellucida (ZP1, ZP2 and ZP3) required for fertilization and early embryonic survival. Essential for oocytes to survive and form primordial follicles. The persistence of FIGLA in adult females suggests that it may regulate additional pathways that are essential for normal ovarian development. Binds to the E-box (5'-CANNTG-3') of the ZPs (ZP1, ZP2, ZP3) promoters. The chain is Factor in the germline alpha (FIGLA) from Homo sapiens (Human).